The sequence spans 104 residues: Small ribosomal subunit protein uS10 (104 aa).

It belongs to the universal ribosomal protein uS10 family. Part of the 30S ribosomal subunit.

Its function is as follows. Involved in the binding of tRNA to the ribosomes. The polypeptide is Small ribosomal subunit protein uS10 (Albidiferax ferrireducens (strain ATCC BAA-621 / DSM 15236 / T118) (Rhodoferax ferrireducens)).